A 405-amino-acid chain; its full sequence is uncharacterized protein (405 aa).

The next 13 helical transmembrane spans lie at 19–39, 48–68, 85–105, 106–126, 129–149, 156–176, 178–198, 224–244, 252–272, 283–303, 309–329, 344–364, and 366–386; these read IVSI…PLAV, MGFS…ATLL, IVVF…LADI, ASAW…ILGI, SFAG…LHIG, GIVT…CYAW, GLQG…LLAL, GMAL…ITLF, GAAF…LLFP, VAMI…TAAM, IGVL…GVVA, TYTV…GLVM, and WAGV…ALLL.

Belongs to the major facilitator superfamily. YhhS family.

The protein localises to the cell inner membrane. This is an uncharacterized protein from Salmonella enteritidis PT4 (strain P125109).